The following is a 230-amino-acid chain: 7-cyano-7-deazaguanine synthase (230 aa).

Position 8–18 (8–18) interacts with ATP; that stretch reads LSGGMDSAVVT. Zn(2+) is bound by residues cysteine 186, cysteine 196, cysteine 199, and cysteine 202.

It belongs to the QueC family. Zn(2+) serves as cofactor.

It catalyses the reaction 7-carboxy-7-deazaguanine + NH4(+) + ATP = 7-cyano-7-deazaguanine + ADP + phosphate + H2O + H(+). Its pathway is purine metabolism; 7-cyano-7-deazaguanine biosynthesis. Catalyzes the ATP-dependent conversion of 7-carboxy-7-deazaguanine (CDG) to 7-cyano-7-deazaguanine (preQ(0)). The protein is 7-cyano-7-deazaguanine synthase of Xylella fastidiosa (strain M23).